Here is a 235-residue protein sequence, read N- to C-terminus: 2-C-methyl-D-erythritol 4-phosphate cytidylyltransferase (235 aa).

The protein belongs to the IspD/TarI cytidylyltransferase family. IspD subfamily.

It carries out the reaction 2-C-methyl-D-erythritol 4-phosphate + CTP + H(+) = 4-CDP-2-C-methyl-D-erythritol + diphosphate. Its pathway is isoprenoid biosynthesis; isopentenyl diphosphate biosynthesis via DXP pathway; isopentenyl diphosphate from 1-deoxy-D-xylulose 5-phosphate: step 2/6. In terms of biological role, catalyzes the formation of 4-diphosphocytidyl-2-C-methyl-D-erythritol from CTP and 2-C-methyl-D-erythritol 4-phosphate (MEP). The chain is 2-C-methyl-D-erythritol 4-phosphate cytidylyltransferase from Leptospira borgpetersenii serovar Hardjo-bovis (strain L550).